Reading from the N-terminus, the 359-residue chain is Protein mab-21-like 2 (359 aa).

Belongs to the mab-21 family.

Its subcellular location is the nucleus. The protein localises to the cytoplasm. In terms of biological role, required for several aspects of embryonic development including normal development of the eye. This Homo sapiens (Human) protein is Protein mab-21-like 2 (MAB21L2).